The following is a 270-amino-acid chain: Bis(5'-nucleosyl)-tetraphosphatase, symmetrical (270 aa).

The protein belongs to the Ap4A hydrolase family.

It carries out the reaction P(1),P(4)-bis(5'-adenosyl) tetraphosphate + H2O = 2 ADP + 2 H(+). In terms of biological role, hydrolyzes diadenosine 5',5'''-P1,P4-tetraphosphate to yield ADP. In Thioalkalivibrio sulfidiphilus (strain HL-EbGR7), this protein is Bis(5'-nucleosyl)-tetraphosphatase, symmetrical.